A 464-amino-acid polypeptide reads, in one-letter code: Protein FAM90A9 (464 aa).

Disordered stretches follow at residues 1–42, 70–389, and 411–437; these read MMAR…DPRL, PATL…HDGA, and APSF…SEAP. Composition is skewed to basic and acidic residues over residues 74–89 and 97–114; these read GKKE…KPRV and NKDK…DPQR. Residues 180–197 show a composition bias toward low complexity; the sequence is LASLSPLRKASLSSSSSL.

This sequence belongs to the FAM90 family.

The protein is Protein FAM90A9 (FAM90A9) of Homo sapiens (Human).